The chain runs to 492 residues: Cobyric acid synthase (492 aa).

The GATase cobBQ-type domain maps to 252–440 (QLNVVVPVLT…LHGIFEQTEA (189 aa)). The active-site Nucleophile is the Cys333. His432 is an active-site residue.

It belongs to the CobB/CobQ family. CobQ subfamily.

The protein operates within cofactor biosynthesis; adenosylcobalamin biosynthesis. Catalyzes amidations at positions B, D, E, and G on adenosylcobyrinic A,C-diamide. NH(2) groups are provided by glutamine, and one molecule of ATP is hydrogenolyzed for each amidation. This is Cobyric acid synthase from Photobacterium profundum (strain SS9).